Consider the following 637-residue polypeptide: DNA primase (637 aa).

Residues Cys39–Cys63 form a CHC2-type zinc finger. The Toprim domain occupies His257–Asp338. Residues Glu263, Asp307, and Asp309 each contribute to the Mg(2+) site.

The protein belongs to the DnaG primase family. Monomer. Interacts with DnaB. Requires Zn(2+) as cofactor. Mg(2+) is required as a cofactor.

The catalysed reaction is ssDNA + n NTP = ssDNA/pppN(pN)n-1 hybrid + (n-1) diphosphate.. RNA polymerase that catalyzes the synthesis of short RNA molecules used as primers for DNA polymerase during DNA replication. The chain is DNA primase from Lactococcus lactis subsp. lactis (strain IL1403) (Streptococcus lactis).